Here is a 347-residue protein sequence, read N- to C-terminus: Protein RecA (347 aa).

G65 to T72 is a binding site for ATP.

This sequence belongs to the RecA family.

It is found in the cytoplasm. Can catalyze the hydrolysis of ATP in the presence of single-stranded DNA, the ATP-dependent uptake of single-stranded DNA by duplex DNA, and the ATP-dependent hybridization of homologous single-stranded DNAs. It interacts with LexA causing its activation and leading to its autocatalytic cleavage. This is Protein RecA from Stutzerimonas stutzeri (Pseudomonas stutzeri).